Reading from the N-terminus, the 642-residue chain is Mini-chromosome maintenance complex-binding protein (642 aa).

Polar residues predominate over residues 151 to 161; the sequence is ARVSPSTSYTP. The tract at residues 151–200 is disordered; that stretch reads ARVSPSTSYTPSRHKRSYEDDEDMDLQPNKQKDQHSGARQAGGLGGLHWR. Phosphoserine is present on Ser154. Residue Thr160 is modified to Phosphothreonine. Phosphoserine occurs at positions 167 and 298.

The protein belongs to the MCMBP family. In terms of assembly, interacts with the MCM complex: associates with the MCM3-7 complex which lacks MCM2, while it does not interact with the MCM complex when MCM2 is present (MCM2-7 complex). Interacts with the RPA complex, when composed of all RPA1, RPA2 and RPA3 components, but not with RPA1 or RPA2 alone.

The protein localises to the nucleus. Its function is as follows. Associated component of the MCM complex that acts as a regulator of DNA replication. Binds to the MCM complex during late S phase and promotes the disassembly of the MCM complex from chromatin, thereby acting as a key regulator of pre-replication complex (pre-RC) unloading from replicated DNA. Can dissociate the MCM complex without addition of ATP; probably acts by destabilizing interactions of each individual subunits of the MCM complex. Required for sister chromatid cohesion. The polypeptide is Mini-chromosome maintenance complex-binding protein (Mcmbp) (Rattus norvegicus (Rat)).